A 410-amino-acid polypeptide reads, in one-letter code: Peptidase T (410 aa).

A Zn(2+)-binding site is contributed by H77. D79 is an active-site residue. A Zn(2+)-binding site is contributed by D140. E174 serves as the catalytic Proton acceptor. Residues E175, D197, and H379 each coordinate Zn(2+).

This sequence belongs to the peptidase M20B family. Zn(2+) is required as a cofactor.

It is found in the cytoplasm. It catalyses the reaction Release of the N-terminal residue from a tripeptide.. Functionally, cleaves the N-terminal amino acid of tripeptides. This is Peptidase T from Desulfitobacterium hafniense (strain DSM 10664 / DCB-2).